A 290-amino-acid chain; its full sequence is Glycine--tRNA ligase alpha subunit (290 aa).

Belongs to the class-II aminoacyl-tRNA synthetase family. As to quaternary structure, tetramer of two alpha and two beta subunits.

It localises to the cytoplasm. It carries out the reaction tRNA(Gly) + glycine + ATP = glycyl-tRNA(Gly) + AMP + diphosphate. In Gloeobacter violaceus (strain ATCC 29082 / PCC 7421), this protein is Glycine--tRNA ligase alpha subunit.